Reading from the N-terminus, the 484-residue chain is tRNA-2-methylthio-N(6)-dimethylallyladenosine synthase (484 aa).

One can recognise an MTTase N-terminal domain in the interval 29-149 (GVFHIHTLGC…LPKLLDQNRA (121 aa)). 6 residues coordinate [4Fe-4S] cluster: Cys-38, Cys-78, Cys-112, Cys-186, Cys-190, and Cys-193. The Radical SAM core domain maps to 172 to 401 (RASRISSWVA…VALQEQITEE (230 aa)). Positions 404-474 (ATFEGRDVEV…RHNLLADPDV (71 aa)) constitute a TRAM domain.

Belongs to the methylthiotransferase family. MiaB subfamily. In terms of assembly, monomer. Requires [4Fe-4S] cluster as cofactor.

It localises to the cytoplasm. The catalysed reaction is N(6)-dimethylallyladenosine(37) in tRNA + (sulfur carrier)-SH + AH2 + 2 S-adenosyl-L-methionine = 2-methylsulfanyl-N(6)-dimethylallyladenosine(37) in tRNA + (sulfur carrier)-H + 5'-deoxyadenosine + L-methionine + A + S-adenosyl-L-homocysteine + 2 H(+). Its function is as follows. Catalyzes the methylthiolation of N6-(dimethylallyl)adenosine (i(6)A), leading to the formation of 2-methylthio-N6-(dimethylallyl)adenosine (ms(2)i(6)A) at position 37 in tRNAs that read codons beginning with uridine. This is tRNA-2-methylthio-N(6)-dimethylallyladenosine synthase from Bifidobacterium longum subsp. infantis (strain ATCC 15697 / DSM 20088 / JCM 1222 / NCTC 11817 / S12).